We begin with the raw amino-acid sequence, 183 residues long: Bifunctional protein PyrR (183 aa).

A PRPP-binding motif is present at residues 102–114; it reads VVLVDDVLYTGRT.

This sequence belongs to the purine/pyrimidine phosphoribosyltransferase family. PyrR subfamily. As to quaternary structure, homodimer and homohexamer; in equilibrium.

It carries out the reaction UMP + diphosphate = 5-phospho-alpha-D-ribose 1-diphosphate + uracil. Its function is as follows. Regulates transcriptional attenuation of the pyrimidine nucleotide (pyr) operon by binding in a uridine-dependent manner to specific sites on pyr mRNA. This disrupts an antiterminator hairpin in the RNA and favors formation of a downstream transcription terminator, leading to a reduced expression of downstream genes. In terms of biological role, also displays a weak uracil phosphoribosyltransferase activity which is not physiologically significant. This chain is Bifunctional protein PyrR, found in Listeria monocytogenes serotype 4b (strain CLIP80459).